The primary structure comprises 216 residues: Noggin-1 (216 aa).

Residues 1 to 18 form the signal peptide; the sequence is MDFPRFLLSAYLLLLSFA. Asparagine 55 is a glycosylation site (N-linked (GlcNAc...) asparagine).

This sequence belongs to the noggin family. Homodimer; disulfide-linked.

It localises to the secreted. Inhibitor of bone morphogenetic proteins (BMP) signaling. May play an important role in the dorsoventral patterning of the embryo. The sequence is that of Noggin-1 (nog1) from Danio rerio (Zebrafish).